A 345-amino-acid polypeptide reads, in one-letter code: MTDKTSLSYKDAGVDIDAGNALVDRIKGVVKKTRRPEVMGGLGGFGALCALPQKYREPVLVSGTDGVGTKLRLAMDLKRHDAIGIDLVAMCVNDLVVQGAEPLFFLDYYATGKLDVDTAASVINGIAEGCLQSGCALVGGETAEMPGMYHGEDYDVAGFCVGVVEKSEIIDGSRVAEGDVLIALGSSGPHSNGYSLVRKIIDVSGCDPQTTLLEGKPLADHLLEPTRIYVKSVLELIENIDVHAIAHLTGGGFWENIPRVLPENTQAVINESSWQWPAIFTWLQTAGNVSRHEMYRTFNCGVGMVIALSAPEADKALALLNEKGENAWKIGIIKASDSEQRVVIE.

Belongs to the AIR synthase family.

It is found in the cytoplasm. It catalyses the reaction 2-formamido-N(1)-(5-O-phospho-beta-D-ribosyl)acetamidine + ATP = 5-amino-1-(5-phospho-beta-D-ribosyl)imidazole + ADP + phosphate + H(+). Its pathway is purine metabolism; IMP biosynthesis via de novo pathway; 5-amino-1-(5-phospho-D-ribosyl)imidazole from N(2)-formyl-N(1)-(5-phospho-D-ribosyl)glycinamide: step 2/2. This chain is Phosphoribosylformylglycinamidine cyclo-ligase, found in Salmonella choleraesuis (strain SC-B67).